A 223-amino-acid polypeptide reads, in one-letter code: Ribonuclease 3 (223 aa).

The 123-residue stretch at 5-127 (LQRLEKKIGY…IIGAIYLDSD (123 aa)) folds into the RNase III domain. Glutamate 40 contacts Mg(2+). Aspartate 44 is an active-site residue. Mg(2+)-binding residues include aspartate 113 and glutamate 116. Glutamate 116 is a catalytic residue. In terms of domain architecture, DRBM spans 154–223 (DPKTRLQEYL…AADIALGQLN (70 aa)).

Belongs to the ribonuclease III family. In terms of assembly, homodimer. Mg(2+) is required as a cofactor.

It localises to the cytoplasm. The catalysed reaction is Endonucleolytic cleavage to 5'-phosphomonoester.. In terms of biological role, digests double-stranded RNA. Involved in the processing of primary rRNA transcript to yield the immediate precursors to the large and small rRNAs (23S and 16S). Processes some mRNAs, and tRNAs when they are encoded in the rRNA operon. Processes pre-crRNA and tracrRNA of type II CRISPR loci if present in the organism. This is Ribonuclease 3 from Aliivibrio fischeri (strain ATCC 700601 / ES114) (Vibrio fischeri).